The following is a 363-amino-acid chain: 3-isopropylmalate dehydrogenase (363 aa).

Position 78 to 91 (Gly78 to Glu91) interacts with NAD(+). Residues Arg99, Arg109, Arg138, and Asp227 each contribute to the substrate site. Residues Asp227, Asp251, and Asp255 each coordinate Mg(2+). Residue Gly285–Asn297 coordinates NAD(+).

The protein belongs to the isocitrate and isopropylmalate dehydrogenases family. LeuB type 1 subfamily. In terms of assembly, homodimer. The cofactor is Mg(2+). It depends on Mn(2+) as a cofactor.

The protein resides in the cytoplasm. The catalysed reaction is (2R,3S)-3-isopropylmalate + NAD(+) = 4-methyl-2-oxopentanoate + CO2 + NADH. The protein operates within amino-acid biosynthesis; L-leucine biosynthesis; L-leucine from 3-methyl-2-oxobutanoate: step 3/4. Catalyzes the oxidation of 3-carboxy-2-hydroxy-4-methylpentanoate (3-isopropylmalate) to 3-carboxy-4-methyl-2-oxopentanoate. The product decarboxylates to 4-methyl-2 oxopentanoate. This chain is 3-isopropylmalate dehydrogenase, found in Escherichia coli O157:H7.